A 357-amino-acid chain; its full sequence is Peptide chain release factor 1 (357 aa).

Gln236 carries the N5-methylglutamine modification.

The protein belongs to the prokaryotic/mitochondrial release factor family. Methylated by PrmC. Methylation increases the termination efficiency of RF1.

The protein localises to the cytoplasm. Peptide chain release factor 1 directs the termination of translation in response to the peptide chain termination codons UAG and UAA. This chain is Peptide chain release factor 1, found in Mycobacterium marinum (strain ATCC BAA-535 / M).